The sequence spans 316 residues: Probable cell division protein WhiA (316 aa).

The H-T-H motif DNA-binding region spans Thr275–Ala309.

Belongs to the WhiA family.

Functionally, involved in cell division and chromosome segregation. The polypeptide is Probable cell division protein WhiA (Bacillus mycoides (strain KBAB4) (Bacillus weihenstephanensis)).